We begin with the raw amino-acid sequence, 56 residues long: Venom peptide 5 (56 aa).

The N-terminal stretch at 1-26 (MKTASFILSFVVLLIVIITWIGEVSA) is a signal peptide. Residues 27–42 (VSEPEPVAKATAHAAA) constitute a propeptide that is removed on maturation. The cysteines at positions 49 and 54 are disulfide-linked.

In terms of processing, probably contains 1 disulfide bond, which may be crucial for activity, since the linear peptide without disulfide bond is inactive. Expressed by the venom gland.

It localises to the secreted. The protein is Venom peptide 5 of Eumenes pomiformis (Potter wasp).